The chain runs to 344 residues: Phosphoribosylformylglycinamidine cyclo-ligase (344 aa).

It belongs to the AIR synthase family.

It is found in the cytoplasm. It carries out the reaction 2-formamido-N(1)-(5-O-phospho-beta-D-ribosyl)acetamidine + ATP = 5-amino-1-(5-phospho-beta-D-ribosyl)imidazole + ADP + phosphate + H(+). It functions in the pathway purine metabolism; IMP biosynthesis via de novo pathway; 5-amino-1-(5-phospho-D-ribosyl)imidazole from N(2)-formyl-N(1)-(5-phospho-D-ribosyl)glycinamide: step 2/2. The sequence is that of Phosphoribosylformylglycinamidine cyclo-ligase from Bifidobacterium animalis subsp. lactis (strain AD011).